Here is an 88-residue protein sequence, read N- to C-terminus: UPF0223 protein OB1419 (88 aa).

This sequence belongs to the UPF0223 family.

The polypeptide is UPF0223 protein OB1419 (Oceanobacillus iheyensis (strain DSM 14371 / CIP 107618 / JCM 11309 / KCTC 3954 / HTE831)).